The primary structure comprises 138 residues: Gonadotropin subunit beta-2 (138 aa).

An N-terminal signal peptide occupies residues 1–21; it reads MPASSYFLLFFFMNFFSPAQS. Cystine bridges form between Cys27-Cys75, Cys41-Cys90, Cys44-Cys128, Cys52-Cys106, Cys56-Cys108, and Cys111-Cys118. Residue Asn31 is glycosylated (N-linked (GlcNAc...) asparagine).

This sequence belongs to the glycoprotein hormones subunit beta family. Heterodimer of an alpha and a beta chain.

It localises to the secreted. Its function is as follows. Involved in gametogenesis and steroidogenesis. In Clarias gariepinus (North African catfish), this protein is Gonadotropin subunit beta-2 (cgbb).